The following is a 229-amino-acid chain: MRSGLIAQKVGMTRIFTEDGTHVPVTVLKVDTCQVVSTRSVEKDGYVAVQLGAGTAKVKNVSKPARANFAKAKVEPKKKLVEFRVAPENLLEVGTELSAAHFIPGQYVDVTGTTIGKGFAGGMKRWNFRGLEATHGVSVSHRSHGSTGQRQDPGKVFKGKKMAGHMGDEQVTTQNLTVVSTDADRGLILVKGSVPGHEGSWVLVRDAVKRKLPDGVPFPAGVKAAASAE.

Position 151 is an N5-methylglutamine (Q151).

This sequence belongs to the universal ribosomal protein uL3 family. In terms of assembly, part of the 50S ribosomal subunit. Forms a cluster with proteins L14 and L19. Post-translationally, methylated by PrmB.

In terms of biological role, one of the primary rRNA binding proteins, it binds directly near the 3'-end of the 23S rRNA, where it nucleates assembly of the 50S subunit. The chain is Large ribosomal subunit protein uL3 from Paramagnetospirillum magneticum (strain ATCC 700264 / AMB-1) (Magnetospirillum magneticum).